Here is a 165-residue protein sequence, read N- to C-terminus: Large ribosomal subunit protein uL10 (165 aa).

This sequence belongs to the universal ribosomal protein uL10 family. In terms of assembly, part of the ribosomal stalk of the 50S ribosomal subunit. The N-terminus interacts with L11 and the large rRNA to form the base of the stalk. The C-terminus forms an elongated spine to which L12 dimers bind in a sequential fashion forming a multimeric L10(L12)X complex.

In terms of biological role, forms part of the ribosomal stalk, playing a central role in the interaction of the ribosome with GTP-bound translation factors. This Pectobacterium carotovorum subsp. carotovorum (strain PC1) protein is Large ribosomal subunit protein uL10.